Consider the following 464-residue polypeptide: uncharacterized protein (464 aa).

The TRAM domain occupies 13 to 71 (MLKVSDIIQIKIDKIVFGGEGLGYYNGFAVFVPMSIPEDELEIEIISIKKTYARGLIKN). Positions 295, 324, 345, and 393 each coordinate S-adenosyl-L-methionine. The active-site Nucleophile is the Cys-420.

The protein belongs to the class I-like SAM-binding methyltransferase superfamily. RNA M5U methyltransferase family.

This is an uncharacterized protein from Fusobacterium nucleatum subsp. nucleatum (strain ATCC 25586 / DSM 15643 / BCRC 10681 / CIP 101130 / JCM 8532 / KCTC 2640 / LMG 13131 / VPI 4355).